Consider the following 321-residue polypeptide: Coproporphyrin III ferrochelatase (321 aa).

2 residues coordinate Fe(2+): His-185 and Glu-267.

Belongs to the ferrochelatase family.

The protein resides in the cytoplasm. The enzyme catalyses Fe-coproporphyrin III + 2 H(+) = coproporphyrin III + Fe(2+). It participates in porphyrin-containing compound metabolism; protoheme biosynthesis. Its function is as follows. Involved in coproporphyrin-dependent heme b biosynthesis. Catalyzes the insertion of ferrous iron into coproporphyrin III to form Fe-coproporphyrin III. The polypeptide is Coproporphyrin III ferrochelatase (Lacticaseibacillus paracasei (strain ATCC 334 / BCRC 17002 / CCUG 31169 / CIP 107868 / KCTC 3260 / NRRL B-441) (Lactobacillus paracasei)).